The chain runs to 241 residues: MSNFAVSLPEVIAVLPAAGIGSRMLVDCPKQYLTVGGKTIIEHAIFSLLHHPRIQRVIVVIHPQDTQFSRLSVAQDPRISTVYGGDQRANSVMAGLQLAGQAEWVLVHDAARPCLHLDDLSRLLSITECSQVGGILAAPVRDTMKRAEPGIQAIAHTVDRQDLWHALTPQLFPLELLKLCLSRALREGVAVTDEASALEHCGYHPILVTGRSDNIKVTRPEDLALAEFYLTQRQSLNNDSL.

The protein belongs to the IspD/TarI cytidylyltransferase family. IspD subfamily. In terms of assembly, homodimer.

The catalysed reaction is 2-C-methyl-D-erythritol 4-phosphate + CTP + H(+) = 4-CDP-2-C-methyl-D-erythritol + diphosphate. It functions in the pathway isoprenoid biosynthesis; isopentenyl diphosphate biosynthesis via DXP pathway; isopentenyl diphosphate from 1-deoxy-D-xylulose 5-phosphate: step 2/6. Catalyzes the formation of 4-diphosphocytidyl-2-C-methyl-D-erythritol from CTP and 2-C-methyl-D-erythritol 4-phosphate (MEP). The polypeptide is 2-C-methyl-D-erythritol 4-phosphate cytidylyltransferase (Yersinia pestis).